We begin with the raw amino-acid sequence, 377 residues long: tRNA(Met) cytidine acetate ligase (377 aa).

Residues 7 to 20, Gly100, Asn153, and Arg178 each bind ATP; that span reads ITEY…HLFH.

Belongs to the TmcAL family.

The protein localises to the cytoplasm. The enzyme catalyses cytidine(34) in elongator tRNA(Met) + acetate + ATP = N(4)-acetylcytidine(34) in elongator tRNA(Met) + AMP + diphosphate. Catalyzes the formation of N(4)-acetylcytidine (ac(4)C) at the wobble position of elongator tRNA(Met), using acetate and ATP as substrates. First activates an acetate ion to form acetyladenylate (Ac-AMP) and then transfers the acetyl group to tRNA to form ac(4)C34. This chain is tRNA(Met) cytidine acetate ligase, found in Staphylococcus epidermidis (strain ATCC 12228 / FDA PCI 1200).